A 497-amino-acid chain; its full sequence is Galactose/methyl galactoside import ATP-binding protein MglA 1 (497 aa).

2 consecutive ABC transporter domains span residues 6–243 (LEMR…VGRD) and 256–494 (GKVR…VMSM). ATP is bound at residue 38–45 (GENGAGKS).

This sequence belongs to the ABC transporter superfamily. Galactose/methyl galactoside importer (TC 3.A.1.2.3) family. As to quaternary structure, the complex is composed of one ATP-binding protein (MglA), two transmembrane proteins (MglC) and a solute-binding protein (MglB).

Its subcellular location is the cell inner membrane. It catalyses the reaction D-galactose(out) + ATP + H2O = D-galactose(in) + ADP + phosphate + H(+). The catalysed reaction is methyl beta-D-galactoside(out) + ATP + H2O = methyl beta-D-galactoside(in) + ADP + phosphate + H(+). In terms of biological role, part of the ABC transporter complex MglABC involved in galactose/methyl galactoside import. Responsible for energy coupling to the transport system. The chain is Galactose/methyl galactoside import ATP-binding protein MglA 1 from Photobacterium profundum (strain SS9).